Consider the following 252-residue polypeptide: Chitooligosaccharide deacetylase (252 aa).

Mg(2+)-binding residues include histidine 61 and histidine 125.

Belongs to the YdjC deacetylase family. ChbG subfamily. Homodimer. It depends on Mg(2+) as a cofactor.

The protein resides in the cytoplasm. The catalysed reaction is N,N'-diacetylchitobiose + H2O = N-acetyl-beta-D-glucosaminyl-(1-&gt;4)-D-glucosamine + acetate. It carries out the reaction diacetylchitobiose-6'-phosphate + H2O = N'-monoacetylchitobiose-6'-phosphate + acetate. The protein operates within glycan degradation; chitin degradation. In terms of biological role, involved in the degradation of chitin. ChbG is essential for growth on the acetylated chitooligosaccharides chitobiose and chitotriose but is dispensable for growth on cellobiose and chitosan dimer, the deacetylated form of chitobiose. Deacetylation of chitobiose-6-P and chitotriose-6-P is necessary for both the activation of the chb promoter by the regulatory protein ChbR and the hydrolysis of phosphorylated beta-glucosides by the phospho-beta-glucosidase ChbF. Catalyzes the removal of only one acetyl group from chitobiose-6-P to yield monoacetylchitobiose-6-P, the inducer of ChbR and the substrate of ChbF. The sequence is that of Chitooligosaccharide deacetylase from Escherichia coli O8 (strain IAI1).